Consider the following 676-residue polypeptide: Cysteine-rich receptor-like protein kinase 8 (676 aa).

The first 34 residues, methionine 1–alanine 34, serve as a signal peptide directing secretion. The Extracellular portion of the chain corresponds to glutamine 35 to valine 291. 2 consecutive Gnk2-homologous domains span residues phenylalanine 38–phenylalanine 142 and glutamate 151–phenylalanine 255. Asparagine 46, asparagine 53, asparagine 71, asparagine 114, asparagine 159, asparagine 187, asparagine 257, and asparagine 288 each carry an N-linked (GlcNAc...) asparagine glycan. Residues leucine 292–phenylalanine 312 traverse the membrane as a helical segment. Residues leucine 313–arginine 676 are Cytoplasmic-facing. The 287-residue stretch at phenylalanine 353–phenylalanine 639 folds into the Protein kinase domain. ATP-binding positions include isoleucine 359–valine 367 and lysine 381. At tyrosine 426 the chain carries Phosphotyrosine. Aspartate 478 serves as the catalytic Proton acceptor. Serine 482 is modified (phosphoserine). Threonine 518 carries the phosphothreonine modification. Tyrosine 526 bears the Phosphotyrosine mark. Residues phenylalanine 640 to aspartate 666 form a disordered region. Residues serine 652–proline 662 are compositionally biased toward low complexity.

The protein belongs to the protein kinase superfamily. Ser/Thr protein kinase family. CRK subfamily.

The protein localises to the membrane. It carries out the reaction L-seryl-[protein] + ATP = O-phospho-L-seryl-[protein] + ADP + H(+). It catalyses the reaction L-threonyl-[protein] + ATP = O-phospho-L-threonyl-[protein] + ADP + H(+). This Arabidopsis thaliana (Mouse-ear cress) protein is Cysteine-rich receptor-like protein kinase 8 (CRK8).